Here is a 274-residue protein sequence, read N- to C-terminus: N-acetylmuramic acid 6-phosphate etherase (274 aa).

The 164-residue stretch at 52 to 215 folds into the SIS domain; it reads IIPRMEQGGR…STSIMIRLGR (164 aa). Glutamate 80 acts as the Proton donor in catalysis. Glutamate 111 is a catalytic residue.

This sequence belongs to the GCKR-like family. MurNAc-6-P etherase subfamily. As to quaternary structure, homodimer.

It catalyses the reaction N-acetyl-D-muramate 6-phosphate + H2O = N-acetyl-D-glucosamine 6-phosphate + (R)-lactate. It participates in amino-sugar metabolism; N-acetylmuramate degradation. In terms of biological role, specifically catalyzes the cleavage of the D-lactyl ether substituent of MurNAc 6-phosphate, producing GlcNAc 6-phosphate and D-lactate. This Porphyromonas gingivalis (strain ATCC BAA-308 / W83) protein is N-acetylmuramic acid 6-phosphate etherase.